A 283-amino-acid chain; its full sequence is Release factor glutamine methyltransferase (283 aa).

S-adenosyl-L-methionine is bound by residues aspartate 143 and asparagine 189. 189–192 (NPPY) is a binding site for substrate.

It belongs to the protein N5-glutamine methyltransferase family. PrmC subfamily.

It carries out the reaction L-glutaminyl-[peptide chain release factor] + S-adenosyl-L-methionine = N(5)-methyl-L-glutaminyl-[peptide chain release factor] + S-adenosyl-L-homocysteine + H(+). Functionally, methylates the class 1 translation termination release factors RF1/PrfA and RF2/PrfB on the glutamine residue of the universally conserved GGQ motif. The protein is Release factor glutamine methyltransferase of Clostridium botulinum (strain Hall / ATCC 3502 / NCTC 13319 / Type A).